The sequence spans 418 residues: Serine--tRNA ligase (418 aa).

231–233 (TAE) lines the L-serine pocket. 262-264 (RRE) contributes to the ATP binding site. E285 contacts L-serine. Residue 349–352 (EISS) participates in ATP binding. S384 is an L-serine binding site.

The protein belongs to the class-II aminoacyl-tRNA synthetase family. Type-1 seryl-tRNA synthetase subfamily. Homodimer. The tRNA molecule binds across the dimer.

It localises to the cytoplasm. The catalysed reaction is tRNA(Ser) + L-serine + ATP = L-seryl-tRNA(Ser) + AMP + diphosphate + H(+). The enzyme catalyses tRNA(Sec) + L-serine + ATP = L-seryl-tRNA(Sec) + AMP + diphosphate + H(+). It functions in the pathway aminoacyl-tRNA biosynthesis; selenocysteinyl-tRNA(Sec) biosynthesis; L-seryl-tRNA(Sec) from L-serine and tRNA(Sec): step 1/1. Functionally, catalyzes the attachment of serine to tRNA(Ser). Is also able to aminoacylate tRNA(Sec) with serine, to form the misacylated tRNA L-seryl-tRNA(Sec), which will be further converted into selenocysteinyl-tRNA(Sec). This is Serine--tRNA ligase from Coprothermobacter proteolyticus (strain ATCC 35245 / DSM 5265 / OCM 4 / BT).